Reading from the N-terminus, the 293-residue chain is Pyridoxal 5'-phosphate synthase subunit PdxS (293 aa).

Aspartate 23 lines the D-ribose 5-phosphate pocket. Lysine 80 acts as the Schiff-base intermediate with D-ribose 5-phosphate in catalysis. Glycine 152 is a D-ribose 5-phosphate binding site. Arginine 164 is a D-glyceraldehyde 3-phosphate binding site. Residues glycine 213 and glycine 234–serine 235 contribute to the D-ribose 5-phosphate site.

It belongs to the PdxS/SNZ family. In terms of assembly, in the presence of PdxT, forms a dodecamer of heterodimers.

It carries out the reaction aldehydo-D-ribose 5-phosphate + D-glyceraldehyde 3-phosphate + L-glutamine = pyridoxal 5'-phosphate + L-glutamate + phosphate + 3 H2O + H(+). Its pathway is cofactor biosynthesis; pyridoxal 5'-phosphate biosynthesis. Its function is as follows. Catalyzes the formation of pyridoxal 5'-phosphate from ribose 5-phosphate (RBP), glyceraldehyde 3-phosphate (G3P) and ammonia. The ammonia is provided by the PdxT subunit. Can also use ribulose 5-phosphate and dihydroxyacetone phosphate as substrates, resulting from enzyme-catalyzed isomerization of RBP and G3P, respectively. In Thermus thermophilus (strain ATCC BAA-163 / DSM 7039 / HB27), this protein is Pyridoxal 5'-phosphate synthase subunit PdxS.